Reading from the N-terminus, the 556-residue chain is MCLAVGVGVRAPKHVPQIRRLGRAGRRLRCVTNCALGSCPIVTVQQPGRDFSSPREECGVFGVWAPGELVAKLTYFGLYALQHRGQEAAGIAVADGSQVLVFKDLGLVSQVFDEQTLAAMEGHVAIGHCRYSTTGDTTWENAQPVFRNIAAGSGVALGHNGNLVNTAELAARARDAGLIAKRCPAPATTDSDILGALLAHGAADSTLEQAALELLPTVRGAFCLTFMDENTLYACRDPYGVRPLSLGRLDRGWVVASETAGLDIVGASFVRDIEPGELLAIDADGVRSTRFANPTPKGCVFEYVYLARPDSTLAGRSVHGTRVEIGRRLARECPVEADLVIGVPESGTPAAVGYAQESGISYGQGLMKNAYVGRTFIQPSQTIRQLGIRLKLNPLKEVIRGKRLIVVDDSVVRGNTQRALVRMLREAGAVELHVRIASPPVKWPCFYGIDFPSPAELIANVVADEEEMLEAVRQGIGADTLGYISLRGMIAASEQPASRLCYACFDGRYPIELPSEAMLGKNVIEHMLANAARGAGLRDLAADQVPVDADENCVWR.

Residues 1 to 57 (MCLAVGVGVRAPKHVPQIRRLGRAGRRLRCVTNCALGSCPIVTVQQPGRDFSSPREE) constitute a propeptide that is removed on maturation. Cys58 (nucleophile) is an active-site residue. Residues 58–284 (CGVFGVWAPG…PGELLAIDAD (227 aa)) enclose the Glutamine amidotransferase type-2 domain. Cys299 is a binding site for [4Fe-4S] cluster. Ser346, Asp408, and Asp409 together coordinate Mg(2+). Residues Cys445, Cys501, and Cys504 each contribute to the [4Fe-4S] cluster site.

It in the C-terminal section; belongs to the purine/pyrimidine phosphoribosyltransferase family. Mg(2+) serves as cofactor. [4Fe-4S] cluster is required as a cofactor.

The enzyme catalyses 5-phospho-beta-D-ribosylamine + L-glutamate + diphosphate = 5-phospho-alpha-D-ribose 1-diphosphate + L-glutamine + H2O. It participates in purine metabolism; IMP biosynthesis via de novo pathway; N(1)-(5-phospho-D-ribosyl)glycinamide from 5-phospho-alpha-D-ribose 1-diphosphate: step 1/2. Functionally, catalyzes the formation of phosphoribosylamine from phosphoribosylpyrophosphate (PRPP) and glutamine. The chain is Amidophosphoribosyltransferase from Mycobacterium leprae (strain TN).